The following is a 236-amino-acid chain: Sugar fermentation stimulation protein homolog (236 aa).

It belongs to the SfsA family.

The chain is Sugar fermentation stimulation protein homolog from Desulfotalea psychrophila (strain LSv54 / DSM 12343).